We begin with the raw amino-acid sequence, 400 residues long: Dual specificity mitogen-activated protein kinase kinase 2 (400 aa).

The residue at position 1 (M1) is an N-acetylmethionine. At S23 the chain carries Phosphoserine. The Protein kinase domain maps to 72 to 369; sequence FERISELGAG…LKMLTNHTFI (298 aa). ATP contacts are provided by residues 78 to 86 and K101; that span reads LGAGNGGVV. D194 acts as the Proton acceptor in catalysis. 2 positions are modified to (Microbial infection) O-acetylserine; by Yersinia YopJ; alternate: S222 and S226. S222 carries the phosphoserine; by RAF; alternate modification. Residue S226 is modified to Phosphoserine; alternate. Residues 286–310 form a disordered region; sequence GEEGEPHSISPRPRPPGRPVSGHGM. A phosphoserine mark is found at S293, S295, and S306. Phosphothreonine occurs at positions 394 and 396.

This sequence belongs to the protein kinase superfamily. STE Ser/Thr protein kinase family. MAP kinase kinase subfamily. In terms of assembly, interacts with MORG1. Interacts with SGK1. Interacts with KSR1. Interacts with KSR1 and BRAF; the interaction with KSR1 mediates KSR1-BRAF dimerization. Interacts with GLS. Mg(2+) serves as cofactor. In terms of processing, MAPKK is itself dependent on Ser/Thr phosphorylation for activity catalyzed by MAP kinase kinase kinases (RAF or MEKK1). Phosphorylated by MAP2K1/MEK1. Post-translationally, (Microbial infection) Acetylation of Ser-222 and Ser-226 by Yersinia YopJ prevents phosphorylation and activation, thus blocking the MAPK signaling pathway.

Its subcellular location is the cytoplasm. It is found in the membrane. The catalysed reaction is L-seryl-[protein] + ATP = O-phospho-L-seryl-[protein] + ADP + H(+). It catalyses the reaction L-threonyl-[protein] + ATP = O-phospho-L-threonyl-[protein] + ADP + H(+). It carries out the reaction L-tyrosyl-[protein] + ATP = O-phospho-L-tyrosyl-[protein] + ADP + H(+). Its function is as follows. Catalyzes the concomitant phosphorylation of a threonine and a tyrosine residue in a Thr-Glu-Tyr sequence located in MAP kinases. Activates the ERK1 and ERK2 MAP kinases. Activates BRAF in a KSR1 or KSR2-dependent manner; by binding to KSR1 or KSR2 releases the inhibitory intramolecular interaction between KSR1 or KSR2 protein kinase and N-terminal domains which promotes KSR1 or KSR2-BRAF dimerization and BRAF activation. This chain is Dual specificity mitogen-activated protein kinase kinase 2 (MAP2K2), found in Homo sapiens (Human).